The chain runs to 482 residues: Histone deacetylase 1 (482 aa).

Positions Arg-9–Asp-321 are histone deacetylase. 1D-myo-inositol 1,4,5,6-tetrakisphosphate-binding residues include Gly-27 and Lys-31. At Lys-74 the chain carries N6-acetyllysine; alternate. Lys-74 is covalently cross-linked (Glycyl lysine isopeptide (Lys-Gly) (interchain with G-Cter in SUMO2); alternate). Residue His-141 is part of the active site. Asp-176 and His-178 together coordinate Zn(2+). Lys-220 is modified (N6-acetyllysine). Cys-261 bears the S-nitrosocysteine mark. Asp-264 is a Zn(2+) binding site. Arg-270 lines the 1D-myo-inositol 1,4,5,6-tetrakisphosphate pocket. Cys-273 is subject to S-nitrosocysteine. A compositionally biased stretch (acidic residues) spans Pro-390–Asp-400. Positions Pro-390–Ala-482 are disordered. Phosphoserine occurs at positions 393, 406, 409, 421, and 423. The segment covering Pro-401–Cys-416 has biased composition (basic and acidic residues). Acidic residues predominate over residues Glu-417 to Gly-427. The residue at position 432 (Lys-432) is an N6-methylated lysine; by EHMT2. Lys-438 is covalently cross-linked (Glycyl lysine isopeptide (Lys-Gly) (interchain with G-Cter in SUMO2)). The segment covering Val-443–Ala-482 has biased composition (basic and acidic residues). Lys-444 is covalently cross-linked (Glycyl lysine isopeptide (Lys-Gly) (interchain with G-Cter in SUMO2); alternate). Lys-444 participates in a covalent cross-link: Glycyl lysine isopeptide (Lys-Gly) (interchain with G-Cter in SUMO); alternate. Residues Lys-456, Lys-457, and Lys-473 each participate in a glycyl lysine isopeptide (Lys-Gly) (interchain with G-Cter in SUMO2) cross-link. A Glycyl lysine isopeptide (Lys-Gly) (interchain with G-Cter in SUMO2); alternate cross-link involves residue Lys-476. A Glycyl lysine isopeptide (Lys-Gly) (interchain with G-Cter in SUMO); alternate cross-link involves residue Lys-476. A Glycyl lysine isopeptide (Lys-Gly) (interchain with G-Cter in SUMO2) cross-link involves residue Lys-480.

It belongs to the histone deacetylase family. HD type 1 subfamily. In terms of assembly, part of the core histone deacetylase (HDAC) complex composed of HDAC1, HDAC2, RBBP4 and RBBP7, the core complex associates with SIN3, SAP18 and SAP30 to form the SIN3 HDAC complex. Component of the nucleosome remodeling and deacetylase (NuRD) repressor complex, composed of core proteins MTA1, MTA2, MTA3, RBBP4, RBBP7, HDAC1, HDAC2, MBD2, MBD3, and peripherally associated proteins CDK2AP1, CDK2AP2, GATAD2A, GATAD2B, CHD3, CHD4 and CHD5. The exact stoichiometry of the NuRD complex is unknown, and some subunits such as MBD2 and MBD3, GATAD2A and GATAD2B, and CHD3, CHD4 and CHD5 define mutually exclusive NuRD complexes. Component of a BHC histone deacetylase complex that contains HDAC1, HDAC2, HMG20B/BRAF35, KDM1A, RCOR1/CoREST and PHF21A/BHC80. The BHC complex may also contain ZMYM2, ZNF217, ZMYM3, GSE1 and GTF2I. Component of a mSin3A corepressor complex that contains SIN3A, SAP130, SUDS3/SAP45, ARID4B/SAP180, HDAC1 and HDAC2. Found in a trimeric complex with APBB1 and TSHZ3; the interaction between HDAC1 and APBB1 is mediated by TSHZ3. Forms a complex comprising APPL1, RUVBL2, APPL2, CTNNB1 and HDAC2. Component of a RCOR/GFI/KDM1A/HDAC complex. Part of a complex composed of TRIM28, HDAC1, HDAC2 and EHMT2. Part of a complex containing at least CDYL, MIER1, MIER2, HDAC1 and HDAC2. The large PER complex involved in the histone deacetylation is composed of at least HDAC1, PER2, SFPQ and SIN3A. Associates with the 9-1-1 complex; interacts with HUS1. Found in a complex with DNMT3A and HDAC7. Found in a complex with YY1, SIN3A and GON4L. Identified in a histone deacetylase complex that contains DNTTIP1, HDAC1 and MIDEAS; this complex assembles into a tetramer that contains four copies of each protein chain. Found in a complex composed of at least SINHCAF, SIN3A, HDAC1, SAP30, RBBP4, OGT and TET1. Component of the SIN3B complex, which includes SIN3B, HDAC1, PHF12 and MORF4L1. Interacts with GFI1; the interaction is direct. Interacts directly with GFI1B. Interacts with TSHZ3 (via N-terminus); the interaction is direct. Interacts with APEX1; the interaction is not dependent on the acetylated status of APEX1. Interacts with BANP. Interacts with BAZ2A/TIP5. Interacts with BCL6. Interacts with BCOR. Interacts with BHLHE40/DEC1. Interacts with BRCC3; this interaction is enhanced in the presence of PWWP2B. Interacts with BRMS1. Interacts with BRMS1L. Interacts with C10orf90/FATS (via its N-terminal); the interaction prevents binding of HDAC1 to CDKN1A/p21 and facilitates the acetylation and stabilization of CDKN1A/p21. Interacts with CBFA2T3. Interacts with CCAR2. Interacts with CDK2AP1. Interacts with CHD3. Interacts with CHD4. Interacts with CHFR. Interacts with CIART. Interacts with CDKN1A/p21. Interacts with CDK5 complexed to CDK5R1 (p25). Interacts with CRY1. Interacts with DAXX. Interacts with DDIT3/CHOP. Interacts with DDX5. Interacts with DHX36; this interaction occurs in a RNA-dependent manner. Interacts with DNMT1. Interacts with DNTTIP1. Interacts with E4F1. Interacts with EP300. Interacts with ERCC6. Interacts with GATAD2A. Interacts with HCFC1. Interacts with HDAC9. Interacts with HUS1. Interacts with INSM1. Interacts with KDM4A. Interacts with KDM5A; this interaction impairs histone deacetylation. Interacts with KDM5B. Interacts with KLF1. Interacts with MBD3L2. Interacts with MIER1. Interacts with NFE4. Interacts with NR4A2/NURR1. Interacts with NR1D2 (via C-terminus). Interacts with NRIP1. Interacts with NSD2. Interacts with PACS2. Interacts with PHB2. Interacts with PPHLN1. Interacts with PRDM6. Interacts with PRDM16. Interacts with PWWP2A in a MTA1-dependent manner. Interacts with PWWP2B. Interacts with RB1. Interacts with RERE. Interacts with SANBR (via the BTB domain). Interacts with SAMSN1. Interacts with SAP30L. Interacts with SETDB1. Interacts with SIN3A. Interacts with SMAD3. Interacts with SMAD4; positively regulated by ZBTB7A. Interacts with SMARCAD1. Interacts with SMARCA4/BRG1. Interacts with SMYD2. Interacts with SMYD4 (via MYND-type zinc finger). Interacts with SP1; the interaction deacetylates SP1 and regulates its transcriptional activity. Interacts with SP3; the interaction deacetylates SP3 and regulates its transcriptional activity. In vitro, C(18) ceramides increase this interaction and the subsequent SP3 deacetylation and SP3-mediated repression of the TERT promoter. Interacts with SPEN/MINT. Interacts with SPHK2. Interacts with SUV39H1. Interacts with TGIF. Interacts with TGIF2. Interacts with TRAF6. Interacts with TRIM28; the interaction recruits HDAC1 to E2F1 and inhibits its acetylation. Interacts with TSC22D3 isoform 1; this interaction affects HDAC1 activity on MYOG promoter and thus inhibits MYOD1 transcriptional activity. Interacts with UHRF1. Interacts with UHRF2. Interacts with ZBTB7A. Interacts with ZMYND8. Interacts with ZMYND15. Interacts with ZNF431. Interacts with ZNF516; this interaction is enhanced in the presence of PWWP2B. Interacts with ZNF541. Interacts with ZNF638. Interacts with ZNHIT1. Interacts with the non-histone region of MACROH2A1. Identified in a complex with HDAC2, KCTD19, DNTTIP1 and ZNF541. Interacts with MSX3. Interacts with VRK1. Zn(2+) is required as a cofactor. In terms of processing, sumoylated on Lys-444 and Lys-476; which promotes enzymatic activity. Desumoylated by SENP1. Phosphorylation on Ser-421 and Ser-423 promotes enzymatic activity and interactions with NuRD and SIN3 complexes. Phosphorylated by CDK5. Post-translationally, ubiquitinated by CHFR and KCTD11, leading to its degradation by the proteasome.

The protein localises to the nucleus. The enzyme catalyses N(6)-acetyl-L-lysyl-[histone] + H2O = L-lysyl-[histone] + acetate. It carries out the reaction N(6)-acetyl-L-lysyl-[protein] + H2O = L-lysyl-[protein] + acetate. It catalyses the reaction N(6)-(2E)-butenoyl-L-lysyl-[protein] + H2O = (2E)-2-butenoate + L-lysyl-[protein]. The catalysed reaction is N(6)-[(S)-lactoyl]-L-lysyl-[protein] + H2O = (S)-lactate + L-lysyl-[protein]. Its activity is regulated as follows. Inositol tetraphosphate (1D-myo-inositol 1,4,5,6-tetrakisphosphate) may act as an intermolecular glue between HDAC1 and N-Cor repressor complex components. Histone deacetylase that catalyzes the deacetylation of lysine residues on the N-terminal part of the core histones (H2A, H2B, H3 and H4). Histone deacetylation gives a tag for epigenetic repression and plays an important role in transcriptional regulation, cell cycle progression and developmental events. Histone deacetylases act via the formation of large multiprotein complexes. Acts as a component of the histone deacetylase NuRD complex which participates in the remodeling of chromatin. As part of the SIN3B complex is recruited downstream of the constitutively active genes transcriptional start sites through interaction with histones and mitigates histone acetylation and RNA polymerase II progression within transcribed regions contributing to the regulation of transcription. Also functions as a deacetylase for non-histone targets, such as NR1D2, RELA, SP1, SP3, STAT3 and TSHZ3. Deacetylates SP proteins, SP1 and SP3, and regulates their function. Component of the BRG1-RB1-HDAC1 complex, which negatively regulates the CREST-mediated transcription in resting neurons. Upon calcium stimulation, HDAC1 is released from the complex and CREBBP is recruited, which facilitates transcriptional activation. Deacetylates TSHZ3 and regulates its transcriptional repressor activity. Deacetylates 'Lys-310' in RELA and thereby inhibits the transcriptional activity of NF-kappa-B. Deacetylates NR1D2 and abrogates the effect of KAT5-mediated relieving of NR1D2 transcription repression activity. Component of a RCOR/GFI/KDM1A/HDAC complex that suppresses, via histone deacetylase (HDAC) recruitment, a number of genes implicated in multilineage blood cell development. Involved in CIART-mediated transcriptional repression of the circadian transcriptional activator: CLOCK-BMAL1 heterodimer. Required for the transcriptional repression of circadian target genes, such as PER1, mediated by the large PER complex or CRY1 through histone deacetylation. In addition to protein deacetylase activity, also has protein-lysine deacylase activity: acts as a protein decrotonylase and delactylase by mediating decrotonylation ((2E)-butenoyl) and delactylation (lactoyl) of histones, respectively. The sequence is that of Histone deacetylase 1 (Hdac1) from Rattus norvegicus (Rat).